We begin with the raw amino-acid sequence, 248 residues long: MKKLLIIGNWKMNKTYDEARDFINAFSNAYALNGAKISENIEYGIAPSFTNMSLFNKELLEKTNINLVAQNINENRSGAFTGEISAQMLKSINAKYVIVGHSERRQNYRETNKIVNQKAKAAIENGLIPIICVGESLEEYEAGKTKAVIKKQIKQSLEALDLSKIVVAYEPIWAIGTGKVATAEVAQQICKFIRSITSKDLIIQYGGSVSPSNIENLMKQEDIDGALVGGASLEVDSFFELITFNALK.

Substrate is bound at residue 9-11; the sequence is NWK. Histidine 101 (electrophile) is an active-site residue. Residue glutamate 170 is the Proton acceptor of the active site. Substrate is bound by residues glycine 176, serine 208, and 229-230; that span reads GG.

It belongs to the triosephosphate isomerase family. As to quaternary structure, homodimer.

The protein localises to the cytoplasm. It catalyses the reaction D-glyceraldehyde 3-phosphate = dihydroxyacetone phosphate. It participates in carbohydrate biosynthesis; gluconeogenesis. It functions in the pathway carbohydrate degradation; glycolysis; D-glyceraldehyde 3-phosphate from glycerone phosphate: step 1/1. Functionally, involved in the gluconeogenesis. Catalyzes stereospecifically the conversion of dihydroxyacetone phosphate (DHAP) to D-glyceraldehyde-3-phosphate (G3P). The sequence is that of Triosephosphate isomerase from Mycoplasmopsis pulmonis (strain UAB CTIP) (Mycoplasma pulmonis).